The primary structure comprises 379 residues: Nucleosome assembly protein 1;2 (379 aa).

The stretch at 26–80 (VNALKNKLQNLAGQHSDVLENLTPPVRKRVEFLREIQNQYDEMEAKFFEERAALE) forms a coiled coil. A Phosphoserine modification is found at Ser-41. A Nuclear export signal motif is present at residues 47–62 (LTPPVRKRVEFLREIQ). The short motif at 222–227 (KKKPKK) is the Nuclear localization signal element. Residues 298–379 (AVEADDLDIE…GERPPECKQQ (82 aa)) are disordered. The span at 299–342 (VEADDLDIEDDDDEIDEDDDEEDEEDDEDDEEEDDEDDDEEEEA) shows a compositional bias: acidic residues. Positions 347-360 (KSKKKSSAGHKKAG) are enriched in basic residues. Cysteine methyl ester is present on Cys-376. Cys-376 carries the S-farnesyl cysteine lipid modification. Residues 377-379 (KQQ) constitute a propeptide, removed in mature form.

It belongs to the nucleosome assembly protein (NAP) family. As to quaternary structure, can form homomeric and heteromeric protein complexes with NAP1;1, NAP1;3 and NAP1;4. Binds histone H2A. As to expression, ubiquitous.

It localises to the nucleus. The protein resides in the cytoplasm. May modulate chromatin structure by regulation of nucleosome assembly/disassembly. May function in nucleotide excision repair (NER). Involved in somatic homologous recombination. This Arabidopsis thaliana (Mouse-ear cress) protein is Nucleosome assembly protein 1;2 (NAP1;2).